The sequence spans 1070 residues: DNA-directed RNA polymerase subunit beta (1070 aa).

Belongs to the RNA polymerase beta chain family. In plastids the minimal PEP RNA polymerase catalytic core is composed of four subunits: alpha, beta, beta', and beta''. When a (nuclear-encoded) sigma factor is associated with the core the holoenzyme is formed, which can initiate transcription.

The protein localises to the plastid. Its subcellular location is the chloroplast. It catalyses the reaction RNA(n) + a ribonucleoside 5'-triphosphate = RNA(n+1) + diphosphate. Its function is as follows. DNA-dependent RNA polymerase catalyzes the transcription of DNA into RNA using the four ribonucleoside triphosphates as substrates. The chain is DNA-directed RNA polymerase subunit beta from Solanum bulbocastanum (Wild potato).